Consider the following 432-residue polypeptide: Ribosomal protein uS12 methylthiotransferase RimO (432 aa).

The MTTase N-terminal domain maps to 1 to 112 (MKIGVVSLGC…ILNYLGLKEK (112 aa)). 6 residues coordinate [4Fe-4S] cluster: C10, C46, C75, C134, C138, and C141. Residues 120–350 (STPRSYAYLK…MAIQRGITRK (231 aa)) enclose the Radical SAM core domain. The 70-residue stretch at 353–422 (EEFLGKEIEV…DYDLAGRDTE (70 aa)) folds into the TRAM domain.

It belongs to the methylthiotransferase family. RimO subfamily. [4Fe-4S] cluster serves as cofactor.

The protein localises to the cytoplasm. The enzyme catalyses L-aspartate(89)-[ribosomal protein uS12]-hydrogen + (sulfur carrier)-SH + AH2 + 2 S-adenosyl-L-methionine = 3-methylsulfanyl-L-aspartate(89)-[ribosomal protein uS12]-hydrogen + (sulfur carrier)-H + 5'-deoxyadenosine + L-methionine + A + S-adenosyl-L-homocysteine + 2 H(+). In terms of biological role, catalyzes the methylthiolation of an aspartic acid residue of ribosomal protein uS12. The sequence is that of Ribosomal protein uS12 methylthiotransferase RimO from Aquifex aeolicus (strain VF5).